We begin with the raw amino-acid sequence, 120 residues long: Ribonuclease P protein component (120 aa).

The protein belongs to the RnpA family. Consists of a catalytic RNA component (M1 or rnpB) and a protein subunit.

It catalyses the reaction Endonucleolytic cleavage of RNA, removing 5'-extranucleotides from tRNA precursor.. Functionally, RNaseP catalyzes the removal of the 5'-leader sequence from pre-tRNA to produce the mature 5'-terminus. It can also cleave other RNA substrates such as 4.5S RNA. The protein component plays an auxiliary but essential role in vivo by binding to the 5'-leader sequence and broadening the substrate specificity of the ribozyme. In Dehalococcoides mccartyi (strain ATCC BAA-2266 / KCTC 15142 / 195) (Dehalococcoides ethenogenes (strain 195)), this protein is Ribonuclease P protein component.